The following is a 302-amino-acid chain: UDP-N-acetylenolpyruvoylglucosamine reductase (302 aa).

Residues 31–196 enclose the FAD-binding PCMH-type domain; that stretch reads KIGGPADVLA…LRAWISLERG (166 aa). Residue Arg175 is part of the active site. The Proton donor role is filled by Ser225. Glu295 is a catalytic residue.

This sequence belongs to the MurB family. Requires FAD as cofactor.

The protein resides in the cytoplasm. It catalyses the reaction UDP-N-acetyl-alpha-D-muramate + NADP(+) = UDP-N-acetyl-3-O-(1-carboxyvinyl)-alpha-D-glucosamine + NADPH + H(+). It functions in the pathway cell wall biogenesis; peptidoglycan biosynthesis. In terms of biological role, cell wall formation. The polypeptide is UDP-N-acetylenolpyruvoylglucosamine reductase (Caldanaerobacter subterraneus subsp. tengcongensis (strain DSM 15242 / JCM 11007 / NBRC 100824 / MB4) (Thermoanaerobacter tengcongensis)).